Reading from the N-terminus, the 61-residue chain is Putative antitoxin VapB21 (61 aa).

It belongs to the UPF0165 family.

In terms of biological role, possibly the antitoxin component of a type II toxin-antitoxin (TA) system. Its cognate toxin is VapC21 (Potential). This chain is Putative antitoxin VapB21 (vapB21), found in Archaeoglobus fulgidus (strain ATCC 49558 / DSM 4304 / JCM 9628 / NBRC 100126 / VC-16).